The following is a 1724-amino-acid chain: Sperm flagellar protein 2 (1724 aa).

A Calponin-homology (CH) domain is found at 1-105 (MSEILCQWLN…LLYQLYIALQ (105 aa)). Coiled coils occupy residues 170–203 (KAIE…KDLQ) and 255–351 (RRLL…REKE). The segment at 545-576 (HERQKSGKTPPTQEDDKRDPVVNQEKVSKTQD) is disordered. A compositionally biased stretch (basic and acidic residues) spans 558 to 576 (EDDKRDPVVNQEKVSKTQD). Residues 665 to 691 (NQAKLLEEALTGYKRKFLQLKKKKEQM) adopt a coiled-coil conformation. Residues 828-910 (EEKETEKKAG…PTAPPPPKAG (83 aa)) form a disordered region. A compositionally biased stretch (basic and acidic residues) spans 853 to 862 (EAEKDKELHQ). A coiled-coil region spans residues 995–1021 (EDLWEDEETKAELHQRVNDLRDRLWDI). The span at 1177-1194 (RLTEEEKEPPQLDSKEKS) shows a compositional bias: basic and acidic residues. Disordered stretches follow at residues 1177–1241 (RLTE…EMAE), 1580–1618 (VSPI…NANT), and 1704–1724 (SEHA…DEKK). Residues 1210-1221 (PKKKKTDKKGKG) are compositionally biased toward basic residues. The interaction with IFT20 stretch occupies residues 1228 to 1580 (EVSPVTVTPE…MAEKTSISTV (353 aa)). The segment covering 1592–1607 (SSAKEDRELKEEKDDQ) has biased composition (basic and acidic residues).

Interacts (via C-terminus) with IFT20. Interacts with DYNC1I2. As to expression, highly expressed in testis, where it primarily localizes to late spermatocytes, round spermatids and elongating spermatids (at protein level). Found in Sertoli cells of the testis (at protein level). Expressed at lower levels in epididymis (at protein level). Detected in lung, brain, liver and kidney. Also detected in bone, cartilage, trachea, pituitary gland and eye. Expressed in osteoblasts and chondrocytes.

It localises to the cell projection. The protein resides in the cilium. It is found in the flagellum. The protein localises to the cytoplasm. Its subcellular location is the cytoskeleton. It localises to the golgi apparatus. Its function is as follows. Required for correct axoneme development in spermatozoa. Important for normal development of the manchette and sperm head morphology. Essential for male fertility. Plays a role in localization of the intraflagellar transport protein IFT20 to the manchette, suggesting function as an adapter for dynein-mediated protein transport during spermatogenesis. Also plays a role in bone growth where it seems to be required for normal osteoblast differentiation. The protein is Sperm flagellar protein 2 (Spef2) of Mus musculus (Mouse).